The chain runs to 701 residues: Serologically defined colon cancer antigen 8 homolog (701 aa).

The segment covering 1–13 has biased composition (acidic residues); that stretch reads MKPSLESDEEEEL. Disordered stretches follow at residues 1-67 and 84-114; these read MKPS…VQQS and ANIQSLSPSRRKLAAKRATDDGSSSQPGVHN. Residues 45 to 67 show a composition bias toward polar residues; it reads SEPNQQELLSSVQQNPCSPVQQS. Coiled-coil stretches lie at residues 119–173, 203–258, and 323–695; these read INNQ…LKEY, HKWR…AVAA, and QQVK…AGKR. The interval 364–387 is disordered; the sequence is LASEQDKISQAREAARSESKKERE.

Its subcellular location is the cytoplasm. It localises to the cytoskeleton. The protein localises to the microtubule organizing center. It is found in the centrosome. The protein resides in the centriole. Its subcellular location is the cilium basal body. It localises to the cell junction. Plays a role in the establishment of cell polarity and epithelial lumen formation. Also plays an essential role in ciliogenesis and subsequent Hedgehog signaling pathway that requires the presence of intact primary cilia for pathway activation. Mechanistically, interacts with and mediates RABEP2 centrosomal localization which is critical for ciliogenesis. This is Serologically defined colon cancer antigen 8 homolog (Sdccag8) from Danio rerio (Zebrafish).